We begin with the raw amino-acid sequence, 204 residues long: HTH-type transcriptional activator BcrR (204 aa).

Over 1–81 (MEFNEKLQQL…ETENRSNLKK (81 aa)) the chain is Cytoplasmic. Positions 7–61 (LQQLRTGKNLTQEQLAEQLYVSRTAISKWESGKGYPNMESLKCISKFFSVTIDEL) constitute an HTH cro/C1-type domain. Positions 18 to 37 (QEQLAEQLYVSRTAISKWES) form a DNA-binding region, H-T-H motif. A helical membrane pass occupies residues 82–102 (IYNYIYGILDMMAVAFIFLPL). The Extracellular portion of the chain corresponds to 103–126 (YGNSVGGYVYAVNLLSFTATTPFN). The helical transmembrane segment at 127–147 (LAVYWSAFAALIIIGIGKIIS) threads the bilayer. At 148–154 (THLDKEK) the chain is on the cytoplasmic side. Residues 155–175 (WGGIATKCSLTITALAVCFFA) traverse the membrane as a helical segment. Residues 176–181 (AAREPY) lie on the Extracellular side of the membrane. The chain crosses the membrane as a helical span at residues 182 to 202 (ITVLVFLLLIGKIFVWIKQMG). Residues 203-204 (MK) are Cytoplasmic-facing.

The protein localises to the cell membrane. Constitutively bound to the bcrABD promoter. Requires bacitracin for activation, probably through a conformational change, such as the oligomerization of inactive dimers to form active tetramers. In terms of biological role, functions both as a membrane-bound sensor and a transducer of bacitracin availability to activate transcription of the bcrABD operon in the presence of bacitracin. Binds specifically to two inverted repeat sequences on the bcrABD promoter, irrespective of bacitracin concentration. In Enterococcus faecalis (Streptococcus faecalis), this protein is HTH-type transcriptional activator BcrR.